Consider the following 1025-residue polypeptide: Multidrug resistance protein MdtC (1025 aa).

12 helical membrane-spanning segments follow: residues 3–23, 333–353, 360–380, 387–407, 431–451, 463–483, 528–548, 853–873, 875–895, 897–917, 953–973, and 984–1004; these read FFAL…AITL, EVEQ…FLFL, IIPA…MYLC, LSLM…IVVL, VGFT…PLLL, FAVT…TLTP, LVGV…ISIP, VILI…LYES, VHPL…LLAL, LFNA…IGIV, PIMM…LSGG, and ITIV…TPVV.

Belongs to the resistance-nodulation-cell division (RND) (TC 2.A.6) family. MdtC subfamily. In terms of assembly, part of a tripartite efflux system composed of MdtA, MdtB and MdtC. MdtC forms a heteromultimer with MdtB.

The protein resides in the cell inner membrane. Its function is as follows. The MdtABC tripartite complex confers resistance against novobiocin and deoxycholate. In Escherichia coli O139:H28 (strain E24377A / ETEC), this protein is Multidrug resistance protein MdtC.